A 138-amino-acid polypeptide reads, in one-letter code: Large ribosomal subunit protein bL19 (138 aa).

The protein belongs to the bacterial ribosomal protein bL19 family.

Its function is as follows. This protein is located at the 30S-50S ribosomal subunit interface and may play a role in the structure and function of the aminoacyl-tRNA binding site. The chain is Large ribosomal subunit protein bL19 from Rickettsia rickettsii (strain Iowa).